A 124-amino-acid chain; its full sequence is NADPH-dependent 7-cyano-7-deazaguanine reductase (124 aa).

The Thioimide intermediate role is filled by cysteine 40. Residue aspartate 47 is the Proton donor of the active site. Substrate-binding positions include 62-64 (VEL) and 81-82 (HE).

It belongs to the GTP cyclohydrolase I family. QueF type 1 subfamily.

It is found in the cytoplasm. It carries out the reaction 7-aminomethyl-7-carbaguanine + 2 NADP(+) = 7-cyano-7-deazaguanine + 2 NADPH + 3 H(+). It participates in tRNA modification; tRNA-queuosine biosynthesis. Its function is as follows. Catalyzes the NADPH-dependent reduction of 7-cyano-7-deazaguanine (preQ0) to 7-aminomethyl-7-deazaguanine (preQ1). In Wolinella succinogenes (strain ATCC 29543 / DSM 1740 / CCUG 13145 / JCM 31913 / LMG 7466 / NCTC 11488 / FDC 602W) (Vibrio succinogenes), this protein is NADPH-dependent 7-cyano-7-deazaguanine reductase.